The sequence spans 173 residues: Regulator of ribonuclease activity A (173 aa).

It belongs to the RraA family. In terms of assembly, homotrimer. Binds to both RNA-binding sites in the C-terminal region of Rne and to RhlB.

The protein resides in the cytoplasm. In terms of biological role, globally modulates RNA abundance by binding to RNase E (Rne) and regulating its endonucleolytic activity. Can modulate Rne action in a substrate-dependent manner by altering the composition of the degradosome. Modulates RNA-binding and helicase activities of the degradosome. This chain is Regulator of ribonuclease activity A, found in Vibrio vulnificus (strain CMCP6).